The chain runs to 218 residues: tRNA (guanine-N(7)-)-methyltransferase (218 aa).

S-adenosyl-L-methionine is bound by residues Glu46, Glu71, Asp98, and Asp120. The active site involves Asp120. Residue Lys124 coordinates substrate. The interaction with RNA stretch occupies residues 126–131; sequence RHEKRR. Substrate-binding positions include Asp156 and 196 to 199; that span reads TEYE.

Belongs to the class I-like SAM-binding methyltransferase superfamily. TrmB family.

The enzyme catalyses guanosine(46) in tRNA + S-adenosyl-L-methionine = N(7)-methylguanosine(46) in tRNA + S-adenosyl-L-homocysteine. It functions in the pathway tRNA modification; N(7)-methylguanine-tRNA biosynthesis. In terms of biological role, catalyzes the formation of N(7)-methylguanine at position 46 (m7G46) in tRNA. This is tRNA (guanine-N(7)-)-methyltransferase from Lactobacillus johnsonii (strain CNCM I-12250 / La1 / NCC 533).